A 345-amino-acid chain; its full sequence is S-adenosylmethionine:tRNA ribosyltransferase-isomerase (345 aa).

It belongs to the QueA family. In terms of assembly, monomer.

Its subcellular location is the cytoplasm. It catalyses the reaction 7-aminomethyl-7-carbaguanosine(34) in tRNA + S-adenosyl-L-methionine = epoxyqueuosine(34) in tRNA + adenine + L-methionine + 2 H(+). It functions in the pathway tRNA modification; tRNA-queuosine biosynthesis. Transfers and isomerizes the ribose moiety from AdoMet to the 7-aminomethyl group of 7-deazaguanine (preQ1-tRNA) to give epoxyqueuosine (oQ-tRNA). The chain is S-adenosylmethionine:tRNA ribosyltransferase-isomerase from Shewanella baltica (strain OS185).